The chain runs to 143 residues: MQEIEIFCDGSSLGNPGPGGYAAILRYKDKEKTISGGEEFTTNNRMELRALNEALKILKRPCRITLYSDSQYVCQAINVWLVNWQKKNFSKVKNVDLWKEFLKVSKGHLIMAVWIKGHNGHAENERCDSLAKLEAQKRTKTIT.

In terms of domain architecture, RNase H type-1 spans 1 to 136 (MQEIEIFCDG…CDSLAKLEAQ (136 aa)). Mg(2+) contacts are provided by Asp9, Glu47, Asp69, and Asp128.

The protein belongs to the RNase H family. Monomer. Mg(2+) serves as cofactor.

The protein localises to the cytoplasm. It catalyses the reaction Endonucleolytic cleavage to 5'-phosphomonoester.. Endonuclease that specifically degrades the RNA of RNA-DNA hybrids. The sequence is that of Ribonuclease H from Helicobacter pylori (strain HPAG1).